A 148-amino-acid polypeptide reads, in one-letter code: Large ribosomal subunit protein uL15 (148 aa).

A disordered region spans residues 1–57 (MRLNDVKPQKGSKKRRRRVGRGISAGQGASAGLGMRGQKSRSGSGTRPGFEGGQQPL). The span at 10-20 (KGSKKRRRRVG) shows a compositional bias: basic residues. Over residues 23–35 (ISAGQGASAGLGM) the composition is skewed to gly residues.

This sequence belongs to the universal ribosomal protein uL15 family. Part of the 50S ribosomal subunit.

Its function is as follows. Binds to the 23S rRNA. The polypeptide is Large ribosomal subunit protein uL15 (Nostoc sp. (strain PCC 7120 / SAG 25.82 / UTEX 2576)).